The chain runs to 322 residues: ATP-dependent 6-phosphofructokinase (322 aa).

Gly-11 contacts ATP. ADP is bound at residue 21–25; the sequence is RAVVR. ATP contacts are provided by residues 72-73 and 102-105; these read RC and GDGS. A Mg(2+)-binding site is contributed by Asp-103. Substrate is bound at residue 127–129; the sequence is TID. Catalysis depends on Asp-129, which acts as the Proton acceptor. Residue Arg-156 participates in ADP binding. Substrate contacts are provided by residues Arg-164 and 171–173; that span reads MGR. Residues 187 to 189, Arg-213, and 215 to 217 contribute to the ADP site; these read GAE and KKH. Substrate is bound by residues Glu-224, Arg-245, and 251-254; that span reads HIQR.

The protein belongs to the phosphofructokinase type A (PFKA) family. ATP-dependent PFK group I subfamily. Prokaryotic clade 'B1' sub-subfamily. In terms of assembly, homotetramer. The cofactor is Mg(2+).

It localises to the cytoplasm. The catalysed reaction is beta-D-fructose 6-phosphate + ATP = beta-D-fructose 1,6-bisphosphate + ADP + H(+). The protein operates within carbohydrate degradation; glycolysis; D-glyceraldehyde 3-phosphate and glycerone phosphate from D-glucose: step 3/4. With respect to regulation, allosterically activated by ADP and other diphosphonucleosides, and allosterically inhibited by phosphoenolpyruvate. Functionally, catalyzes the phosphorylation of D-fructose 6-phosphate to fructose 1,6-bisphosphate by ATP, the first committing step of glycolysis. In Staphylococcus carnosus (strain TM300), this protein is ATP-dependent 6-phosphofructokinase.